We begin with the raw amino-acid sequence, 139 residues long: Protein archease (139 aa).

Residues D12, D138, and I139 each contribute to the Ca(2+) site.

It belongs to the archease family.

In terms of biological role, activates the tRNA-splicing ligase complex by facilitating the enzymatic turnover of catalytic subunit RtcB. Acts by promoting the guanylylation of RtcB, a key intermediate step in tRNA ligation. Can also alter the NTP specificity of RtcB such that ATP, dGTP or ITP is used efficiently. This is Protein archease from Saccharolobus islandicus (strain M.16.27) (Sulfolobus islandicus).